Here is a 764-residue protein sequence, read N- to C-terminus: Bifunctional type I diterpene synthase tndC (764 aa).

Positions 1-324 (MEYRYSTVVD…CPRYHPWSSY (324 aa)) are terpene cyclase. Mg(2+) is bound by residues Asp-92 and Asp-96. Positions 92–96 (DDVTD) match the DDXXD 1 motif. An NSE/DTE motif is present at residues 224–232 (NDLYSWQKE). A prenyltransferase region spans residues 325–761 (NERQLDWMKN…FQLRLILEML (437 aa)). Residues 377-403 (AVNGNGASHTSSIKGSTGGNGVTHSPV) form a disordered region. Polar residues predominate over residues 381–391 (NGASHTSSIKG). Positions 484, 487, and 516 each coordinate isopentenyl diphosphate. Mg(2+) is bound by residues Asp-523 and Asp-527. The DDXXD 2 signature appears at 523–527 (DDLED). Position 532 (Arg-532) interacts with dimethylallyl diphosphate. An isopentenyl diphosphate-binding site is contributed by Arg-533. Dimethylallyl diphosphate is bound by residues Lys-610, Thr-611, Gln-646, Asn-653, Lys-663, and Lys-673.

It in the N-terminal section; belongs to the terpene synthase family. In the C-terminal section; belongs to the FPP/GGPP synthase family.

It carries out the reaction isopentenyl diphosphate + (2E,6E)-farnesyl diphosphate = (2E,6E,10E)-geranylgeranyl diphosphate + diphosphate. The catalysed reaction is (2E,6E,10E)-geranylgeranyl diphosphate = talarodiene + diphosphate. Its pathway is secondary metabolite biosynthesis; terpenoid biosynthesis. Bifunctional type I diterpene synthase; part of the gene cluster that mediates the biosynthesis of talaronoid C, a fusicoccane diterpenoid with an unprecedented tricyclic 5/8/6 ring system. The first step in the pathway is performed by the fusicoccadiene synthase tndC that possesses both prenyl transferase and terpene cyclase activity, converting isopentenyl diphosphate and dimethylallyl diphosphate into geranylgeranyl diphosphate (GGDP) and further converting GGDP into talarodiene, a precursor for talaronoid C. The remaining enzymes from the cluster include the cytochrome P450 monooxygenase tndB, the aldehyde reductase tndE and the alcohol dehydrogenase tndF that are involved in the conversion of talarodiene into talaronoid C. The polypeptide is Bifunctional type I diterpene synthase tndC (Aspergillus flavipes).